The following is a 206-amino-acid chain: GTP cyclohydrolase 1 (206 aa).

Positions 98, 101, and 169 each coordinate Zn(2+).

It belongs to the GTP cyclohydrolase I family. In terms of assembly, toroid-shaped homodecamer, composed of two pentamers of five dimers.

It catalyses the reaction GTP + H2O = 7,8-dihydroneopterin 3'-triphosphate + formate + H(+). Its pathway is cofactor biosynthesis; 7,8-dihydroneopterin triphosphate biosynthesis; 7,8-dihydroneopterin triphosphate from GTP: step 1/1. This chain is GTP cyclohydrolase 1, found in Helicobacter hepaticus (strain ATCC 51449 / 3B1).